The sequence spans 203 residues: MSYVLPSLPYSYNALEPFFDEETMKIHHTKHHQNYINNTNSILENTTFSSLPIEELISILNEIILEKKNALRNNAGGHINHSFFWKSLKSGTVLTNDLKIEIEKQFGTIDEFKEKFESVALNHFGSGWVWLVNQNGVLSIVSTVNQDSPLMGKLISNTYGYPIIGLDIWEHAYYLKYQNRRLDYIKSFWNVVNWEEASNRLQK.

Residues His27, His81, Asp167, and His171 each contribute to the Mn(2+) site.

Belongs to the iron/manganese superoxide dismutase family. As to quaternary structure, homodimer. Requires Mn(2+) as cofactor.

The enzyme catalyses 2 superoxide + 2 H(+) = H2O2 + O2. Functionally, destroys superoxide anion radicals which are normally produced within the cells and which are toxic to biological systems. This chain is Superoxide dismutase [Mn] (sodA), found in Buchnera aphidicola subsp. Acyrthosiphon pisum (strain APS) (Acyrthosiphon pisum symbiotic bacterium).